The primary structure comprises 251 residues: Triosephosphate isomerase (251 aa).

Residue 9–11 (NWK) participates in substrate binding. The Electrophile role is filled by histidine 95. The active-site Proton acceptor is glutamate 167. Substrate-binding positions include glycine 173, serine 213, and 234-235 (GG).

This sequence belongs to the triosephosphate isomerase family. Homodimer.

The protein localises to the cytoplasm. The catalysed reaction is D-glyceraldehyde 3-phosphate = dihydroxyacetone phosphate. It participates in carbohydrate biosynthesis; gluconeogenesis. The protein operates within carbohydrate degradation; glycolysis; D-glyceraldehyde 3-phosphate from glycerone phosphate: step 1/1. In terms of biological role, involved in the gluconeogenesis. Catalyzes stereospecifically the conversion of dihydroxyacetone phosphate (DHAP) to D-glyceraldehyde-3-phosphate (G3P). This is Triosephosphate isomerase from Ligilactobacillus salivarius (strain UCC118) (Lactobacillus salivarius).